A 57-amino-acid chain; its full sequence is Small ribosomal subunit protein bS21 (57 aa).

The protein belongs to the bacterial ribosomal protein bS21 family.

The sequence is that of Small ribosomal subunit protein bS21 from Bacillus pumilus (strain SAFR-032).